The primary structure comprises 500 residues: Lycopene beta cyclase, chloroplastic (500 aa).

Residues 1–81 (MDTLLKTPNN…ELPMYDPSKG (81 aa)) constitute a chloroplast transit peptide. 86–114 (LAVVGGGPAGLAVAQQVSEAGLSVCSIDP) provides a ligand contact to NAD(+).

This sequence belongs to the lycopene cyclase family.

It is found in the plastid. It localises to the chloroplast. The enzyme catalyses a carotenoid psi-end group = a carotenoid beta-end derivative. Its pathway is carotenoid biosynthesis; beta-carotene biosynthesis. It participates in carotenoid biosynthesis; beta-zeacarotene biosynthesis. Functionally, catalyzes the double cyclization reaction which converts lycopene to beta-carotene and neurosporene to beta-zeacarotene. The polypeptide is Lycopene beta cyclase, chloroplastic (LCY1) (Solanum lycopersicum (Tomato)).